Here is a 160-residue protein sequence, read N- to C-terminus: Surface-adhesin protein E (160 aa).

Residues 1–15 (MKKIILTLSLGLLTA) form the signal peptide. A lipid anchor (N-palmitoyl cysteine) is attached at Cys16. Residue Cys16 is the site of S-diacylglycerol cysteine attachment. Residues 41 to 68 (IRLVKNVNYYIDSESIWVDNQEPQIVHF) are interaction with laminin and plasminogen. The tract at residues 84–108 (PKRYARSVRQYKILNCANYHLTQVR) is interaction with vitronectin and epithelial cells.

As to quaternary structure, homodimer. Interacts with host vitronectin, laminin and plasminogen. Can interact with both immobilized and soluble vitronectin.

The protein resides in the cell outer membrane. It is found in the cell surface. Acts as a multifunctional adhesin involved in direct interactions with host epithelial cells and host proteins, including vitronectin, laminin and plasminogen. In addition, interaction with serum vitronectin plays an important role in bacterial serum resistance, and conversion of plasminogen to plasmin at the cell surface aids in immune evasion and contributes to bacterial virulence. Induces a pro-inflammatory epithelial cell response, leading to interleukin-8 (IL-8) secretion and up-regulation of ICAM1. This Haemophilus influenzae (strain NTHi 3655) protein is Surface-adhesin protein E (pe).